We begin with the raw amino-acid sequence, 154 residues long: Protein X (154 aa).

Positions 68-117 are mitochondrial targeting sequence; it reads PCALRFTSARRMETTVNANQVLPKVLHKRTLGLSALSTTDLEAYFKDCVF.

The protein belongs to the orthohepadnavirus protein X family. In terms of assembly, may form homodimer. May interact with host CEBPA, CFLAR, CREB1, DDB1, E4F1, HBXIP, HSPD1/HSP60, NFKBIA, POLR2E and SMAD4. Interacts with host SMC5-SMC6 complex and induces its degradation. Interacts with host TRPC4AP; leading to prevent ubiquitination of TRPC4AP. Interacts with host PLSCR1; this interaction promotes ubiquitination and degradation of HBx and impairs HBx-mediated cell proliferation. A fraction may be phosphorylated in insect cells and HepG2 cells, a human hepatoblastoma cell line. Phosphorylated in vitro by host protein kinase C or mitogen-activated protein kinase. N-acetylated in insect cells.

Its subcellular location is the host cytoplasm. It localises to the host nucleus. The protein resides in the host mitochondrion. Functionally, multifunctional protein that plays a role in silencing host antiviral defenses and promoting viral transcription. Does not seem to be essential for HBV infection. May be directly involved in development of cirrhosis and liver cancer (hepatocellular carcinoma). Most of cytosolic activities involve modulation of cytosolic calcium. The effect on apoptosis is controversial depending on the cell types in which the studies have been conducted. May induce apoptosis by localizing in mitochondria and causing loss of mitochondrial membrane potential. May also modulate apoptosis by binding host CFLAR, a key regulator of the death-inducing signaling complex (DISC). Promotes viral transcription by using the host E3 ubiquitin ligase DDB1 to target the SMC5-SMC6 complex to proteasomal degradation. This host complex would otherwise bind to viral episomal DNA, and prevents its transcription. Moderately stimulates transcription of many different viral and cellular transcription elements. Promoters and enhancers stimulated by HBx contain DNA binding sites for NF-kappa-B, AP-1, AP-2, c-EBP, ATF/CREB, or the calcium-activated factor NF-AT. The chain is Protein X from Homo sapiens (Human).